A 345-amino-acid polypeptide reads, in one-letter code: Uroporphyrinogen decarboxylase (345 aa).

Residues 27–31 (RQAGR), Phe46, Asp76, Tyr152, Ser207, and His321 each bind substrate.

This sequence belongs to the uroporphyrinogen decarboxylase family. Homodimer.

Its subcellular location is the cytoplasm. It catalyses the reaction uroporphyrinogen III + 4 H(+) = coproporphyrinogen III + 4 CO2. It functions in the pathway porphyrin-containing compound metabolism; protoporphyrin-IX biosynthesis; coproporphyrinogen-III from 5-aminolevulinate: step 4/4. Its function is as follows. Catalyzes the decarboxylation of four acetate groups of uroporphyrinogen-III to yield coproporphyrinogen-III. This chain is Uroporphyrinogen decarboxylase, found in Staphylococcus aureus (strain bovine RF122 / ET3-1).